Consider the following 192-residue polypeptide: Nucleoside triphosphate pyrophosphatase (192 aa).

Asp73 (proton acceptor) is an active-site residue.

It belongs to the Maf family. A divalent metal cation is required as a cofactor.

It is found in the cytoplasm. The enzyme catalyses a ribonucleoside 5'-triphosphate + H2O = a ribonucleoside 5'-phosphate + diphosphate + H(+). It catalyses the reaction a 2'-deoxyribonucleoside 5'-triphosphate + H2O = a 2'-deoxyribonucleoside 5'-phosphate + diphosphate + H(+). Nucleoside triphosphate pyrophosphatase. May have a dual role in cell division arrest and in preventing the incorporation of modified nucleotides into cellular nucleic acids. The chain is Nucleoside triphosphate pyrophosphatase from Ehrlichia canis (strain Jake).